A 430-amino-acid chain; its full sequence is GTPase Obg (430 aa).

One can recognise an Obg domain in the interval 1-158 (MFVDQVKISL…LDVSLELKLL (158 aa)). A disordered region spans residues 118 to 145 (KGGRGGRGNSRFATPRNPAPDFSEKGEP). Residues 159-329 (ADVGLVGFPS…LLYAIADKLE (171 aa)) enclose the OBG-type G domain. GTP is bound by residues 165-172 (GFPSVGKS), 190-194 (FTTIK), 212-215 (DLPG), 282-285 (NKMD), and 310-312 (STI). Positions 172 and 192 each coordinate Mg(2+). One can recognise an OCT domain in the interval 352–430 (KHTPSQDKFT…ILGGEFEFVE (79 aa)).

It belongs to the TRAFAC class OBG-HflX-like GTPase superfamily. OBG GTPase family. Monomer. Mg(2+) serves as cofactor.

The protein localises to the cytoplasm. In terms of biological role, an essential GTPase which binds GTP, GDP and possibly (p)ppGpp with moderate affinity, with high nucleotide exchange rates and a fairly low GTP hydrolysis rate. Plays a role in control of the cell cycle, stress response, ribosome biogenesis and in those bacteria that undergo differentiation, in morphogenesis control. The polypeptide is GTPase Obg (Staphylococcus aureus (strain Mu3 / ATCC 700698)).